The chain runs to 376 residues: Heptahelical transmembrane protein ADIPOR1 (376 aa).

Residues 1–90 are Cytoplasmic-facing; that stretch reads MGEEAAMATM…LSLFSWHNET (90 aa). Residues 20-46 are disordered; it reads PAAAPAPAKGGGSKKKRKQQKREEKRK. Residues 91–111 traverse the membrane as a helical segment; sequence INIWTHLLGFVLFFGLTVLHL. Over 112-179 the chain is Extracellular; the sequence is GQYFPQVADL…AAAAATTRWP (68 aa). The helical transmembrane segment at 180–200 threads the bilayer; it reads FFVFLAGAMFCLLSSAACHLL. The Cytoplasmic portion of the chain corresponds to 201–216; that stretch reads SCHSHRLNLFLIRLDY. Residues 217-237 traverse the membrane as a helical segment; sequence TGIAVMIVVSFFPPIYYIFQC. The Extracellular segment spans residues 238–240; that stretch reads EPR. A helical membrane pass occupies residues 241-261; that stretch reads WQVVYLSAITAAGVATVYALM. Over 262-274 the chain is Cytoplasmic; that stretch reads SPRLSAARYRAHR. A helical membrane pass occupies residues 275-295; sequence ALLFVAMGLSGVVPAAHAVAV. Residues 296-303 lie on the Extracellular side of the membrane; that stretch reads NWHEPRRN. The helical transmembrane segment at 304 to 324 threads the bilayer; it reads VTLAYEGAMAASYLAGTAFYL. The Cytoplasmic portion of the chain corresponds to 325–344; it reads TRVPERWRPGMFDLCGHSHQ. A helical transmembrane segment spans residues 345–365; it reads IFHALVIAGALAHYAAAIVFI. The Extracellular portion of the chain corresponds to 366–376; sequence QARDEMGCPAP.

Belongs to the ADIPOR family.

The protein resides in the membrane. May play a role in abiotic stress response. This is Heptahelical transmembrane protein ADIPOR1 (ADIPOR1) from Oryza sativa subsp. japonica (Rice).